Here is a 535-residue protein sequence, read N- to C-terminus: Probable anion transporter 2, chloroplastic (535 aa).

The N-terminal 95 residues, 1 to 95 (MASIRSCVSV…RERAVAAMCS (95 aa)), are a transit peptide targeting the chloroplast. 12 helical membrane passes run 125-145 (VVALVAAVMLLCNADRVVMSV), 160-180 (FLGIVQSSFLWGYVFSSMVGG), 191-211 (VMAGAAALWSLATFLTPWAAS), 215-235 (IMLLAIRALFGLAEGVAFPTM), 254-274 (ISMGGFHLGNVISFLATPIIM), 279-299 (LAGTFAFFASLGYLWLSVWLF), 343-363 (IEMWAIIVANVVNNWGYFVLL), 381-401 (AAWFSAIPWAVMALSGYVAGA), 413-433 (VALVRKIMQSIGFIGPGVSLL), 443-463 (VAAVLMTIALSLSSFSQAGYF), 483-503 (GIGTVAAIVSTIGTGYFVQWL), and 504-524 (GSFQAFLTLTAVLYFSATVFY).

This sequence belongs to the major facilitator superfamily. Sodium/anion cotransporter (TC 2.A.1.14) family.

Its subcellular location is the plastid. The protein resides in the chloroplast membrane. Probable anion transporter. The sequence is that of Probable anion transporter 2, chloroplastic (PHT4;2) from Oryza sativa subsp. japonica (Rice).